We begin with the raw amino-acid sequence, 545 residues long: MLTQLKTYPKLLKHYEEIKEAHMRDWFSKDKERASRYFVQFESLSLDYSKNRLNDTTLKLLFELANDCSLKEKIEAMFKGEKINTTEKRAVLHTALRSLNDTEILLDNMEVLKSVRSVLKRMRAFSDSVRSGKRLGYTNQVITDIVNIGIGGSDLGALMVCTALKRYGHPRLKMHFVSNVDGTQILDVLEKLNPASTLFIVASKTFSTQETLTNALTARKWFVERSGDEKHIAKHFVAVSTNKEAVQQFGIDEHNMFEFWDFVGGRYSLWSAIGLSIMIYLGKKNFNALLKGAYLMDEHFRNAPFESNLPVLMGLIGVWYINFFQSKSHLIAPYDQYLRHFPKFIQQLDMESNGKRISKKGETIPYDTCPVVWGDMGINAQHAFFQLLHQGTHLIPIDFIASLDKKPNAKGHHEILFSNVLAQAQAFMKGKSYEEALGELLFKGLDKDEAKDLAHHRVFFGNRPSNILLLEKISPSNIGALVALYEHKVFVQGVIWDINSFDQWGVELGKELAVPILQELEGHKSNAYFDSSTKHLIELYKNYNQ.

Catalysis depends on E351, which acts as the Proton donor. Residues H382 and K510 contribute to the active site.

The protein belongs to the GPI family.

The protein localises to the cytoplasm. The enzyme catalyses alpha-D-glucose 6-phosphate = beta-D-fructose 6-phosphate. Its pathway is carbohydrate biosynthesis; gluconeogenesis. It functions in the pathway carbohydrate degradation; glycolysis; D-glyceraldehyde 3-phosphate and glycerone phosphate from D-glucose: step 2/4. Catalyzes the reversible isomerization of glucose-6-phosphate to fructose-6-phosphate. The chain is Glucose-6-phosphate isomerase from Helicobacter pylori (strain HPAG1).